Consider the following 149-residue polypeptide: Ribosome maturation factor RimP (149 aa).

Belongs to the RimP family.

The protein localises to the cytoplasm. Functionally, required for maturation of 30S ribosomal subunits. This is Ribosome maturation factor RimP from Neisseria meningitidis serogroup A / serotype 4A (strain DSM 15465 / Z2491).